A 122-amino-acid chain; its full sequence is MAEPGGRGDYHKDGRPPSLSRSPLFTTLGTSPACGLEIPPTSGARPDGSCSLPAHVYHLQSRQWKGMGRGHRQRWRLQGWGDGDTGCVVQAPSLFPAEIRERTTVKMATLPLDLCAGACWEM.

Residues M1–R15 show a composition bias toward basic and acidic residues. The tract at residues M1–T26 is disordered.

This is an uncharacterized protein from Macaca fascicularis (Crab-eating macaque).